A 256-amino-acid polypeptide reads, in one-letter code: Thiazole synthase (256 aa).

Lys-95 functions as the Schiff-base intermediate with DXP in the catalytic mechanism. Residues Gly-156, 182–183, and 204–205 each bind 1-deoxy-D-xylulose 5-phosphate; these read AG and NT.

The protein belongs to the ThiG family. As to quaternary structure, homotetramer. Forms heterodimers with either ThiH or ThiS.

It localises to the cytoplasm. The enzyme catalyses [ThiS sulfur-carrier protein]-C-terminal-Gly-aminoethanethioate + 2-iminoacetate + 1-deoxy-D-xylulose 5-phosphate = [ThiS sulfur-carrier protein]-C-terminal Gly-Gly + 2-[(2R,5Z)-2-carboxy-4-methylthiazol-5(2H)-ylidene]ethyl phosphate + 2 H2O + H(+). It functions in the pathway cofactor biosynthesis; thiamine diphosphate biosynthesis. Catalyzes the rearrangement of 1-deoxy-D-xylulose 5-phosphate (DXP) to produce the thiazole phosphate moiety of thiamine. Sulfur is provided by the thiocarboxylate moiety of the carrier protein ThiS. In vitro, sulfur can be provided by H(2)S. This is Thiazole synthase from Escherichia coli O7:K1 (strain IAI39 / ExPEC).